The primary structure comprises 91 residues: Em-like protein (91 aa).

2 stretches are compositionally biased toward basic and acidic residues: residues 1 to 18 (MEQQ…REGE) and 31 to 51 (DAQE…KEQI). The disordered stretch occupies residues 1-91 (MEQQQDRREL…PIDESKYRHP (91 aa)). A compositionally biased stretch (gly residues) spans 62–73 (KGGLSSAGGPGG). A compositionally biased stretch (basic and acidic residues) spans 75–91 (RASEEGRPIDESKYRHP).

Belongs to the small hydrophilic plant seed protein family.

The protein is Em-like protein of Picea glauca (White spruce).